The primary structure comprises 817 residues: Kinesin-like protein 2 (817 aa).

The tract at residues 1–155 (MEEEGHKSLT…YNDEKSVNAS (155 aa)) is disordered. Residues 8-23 (SLTSHLPQSSSSLSQS) show a composition bias toward low complexity. Residues 39 to 60 (IKTNSSSSNILKPRLSLQNEVN) are compositionally biased toward polar residues. Residues 76–86 (SLASVKSSSLA) are compositionally biased toward low complexity. Over residues 106-116 (PISSRSVSASS) the composition is skewed to polar residues. Residues 122-132 (ASAVSSSLNSS) show a composition bias toward low complexity. Residues 155–242 (SALRTTEDRL…VSQKGMESLE (88 aa)) adopt a coiled-coil conformation. ATP is bound by residues Asn473, Arg475, Arg479, Glu543, Gly566, Ser567, Gly568, Lys569, Thr570, and Thr778. In terms of domain architecture, Kinesin motor spans 473 to 807 (NIRVFCRVRP…LRFATKVNNT (335 aa)).

The protein belongs to the TRAFAC class myosin-kinesin ATPase superfamily. Kinesin family. NCD subfamily.

It localises to the cytoplasm. Its subcellular location is the cytoskeleton. The protein localises to the spindle. The protein resides in the nucleus. The enzyme catalyses ATP + H2O = ADP + phosphate + H(+). It carries out the reaction ATP + H2O + a kinesin associated with a microtubule at position (n) = ADP + phosphate + a kinesin associated with a microtubule at position (n-1, toward the minus end).. In terms of biological role, minus end-directed microtubule (MT) motor that is involved in spindle microtubule shortening, kinetochore capture, and polarization of cytoplasmic microtubules. During mitosis, promotes spindle microtubule shortening by depolymerization. During metaphase, involved in the recapture of kinetochores displaced from the spindle and their transport towards the spindle pole body; promotes transport both by microtubule end-on pulling and by lateral sliding along the side of the microtubule. During interphase, required for the polarization of cytoplasmic microtubules where it orients the microtubule plus ends toward the cell ends and the minus ends toward the cell center. Required for karyogamy. This is Kinesin-like protein 2 from Schizosaccharomyces pombe (strain 972 / ATCC 24843) (Fission yeast).